The chain runs to 76 residues: cAMP-dependent protein kinase inhibitor alpha (76 aa).

An N-acetylthreonine modification is found at Thr-2. Positions 49 to 76 are disordered; that stretch reads KTEGEEDAQRSSTEQSGEAQGEAAKSES.

Belongs to the PKI family.

Its function is as follows. Extremely potent competitive inhibitor of cAMP-dependent protein kinase activity, this protein interacts with the catalytic subunit of the enzyme after the cAMP-induced dissociation of its regulatory chains. The polypeptide is cAMP-dependent protein kinase inhibitor alpha (PKIA) (Homo sapiens (Human)).